We begin with the raw amino-acid sequence, 613 residues long: Transcription factor cbf11 (613 aa).

The interval 32–58 (NNGLHNQEDGAGGRNENSERVGSGSPG) is disordered.

It belongs to the Su(H) family.

The protein resides in the cytoplasm. It is found in the nucleus. Transcription factor that behaves as a negative regulator of adhesion. Recognizes specifically the canonical CSL response element GTGA/GGAA. May also play a cbf12-antagonistic role in the regulation of a number of other important processes such as extracellular material production, colony morphogenesis, ploidy maintenance, or meiosis. The polypeptide is Transcription factor cbf11 (cbf11) (Schizosaccharomyces pombe (strain 972 / ATCC 24843) (Fission yeast)).